The chain runs to 110 residues: Large ribosomal subunit protein uL22 (110 aa).

Belongs to the universal ribosomal protein uL22 family. In terms of assembly, part of the 50S ribosomal subunit.

Functionally, this protein binds specifically to 23S rRNA; its binding is stimulated by other ribosomal proteins, e.g. L4, L17, and L20. It is important during the early stages of 50S assembly. It makes multiple contacts with different domains of the 23S rRNA in the assembled 50S subunit and ribosome. Its function is as follows. The globular domain of the protein is located near the polypeptide exit tunnel on the outside of the subunit, while an extended beta-hairpin is found that lines the wall of the exit tunnel in the center of the 70S ribosome. This chain is Large ribosomal subunit protein uL22, found in Hahella chejuensis (strain KCTC 2396).